Here is a 320-residue protein sequence, read N- to C-terminus: Solute carrier family 35 member B1 (320 aa).

8 consecutive transmembrane segments (helical) span residues G9–L29, F49–I69, Q81–L103, Y134–Y154, T166–V186, M202–G222, I241–Y261, and V283–L303. A Di-lysine motif motif is present at residues K316–H320.

Belongs to the nucleotide-sugar transporter family. SLC35B subfamily.

The protein localises to the endoplasmic reticulum membrane. In terms of biological role, probable sugar transporter. The protein is Solute carrier family 35 member B1 (slc35b1) of Xenopus laevis (African clawed frog).